The chain runs to 74 residues: UPF0291 protein EF_0064 (74 aa).

Residues 53-74 are disordered; sequence YDPTGEDVTPEKLKEEQQKYFD. A compositionally biased stretch (basic and acidic residues) spans 61 to 74; the sequence is TPEKLKEEQQKYFD.

This sequence belongs to the UPF0291 family.

It is found in the cytoplasm. The chain is UPF0291 protein EF_0064 from Enterococcus faecalis (strain ATCC 700802 / V583).